A 178-amino-acid polypeptide reads, in one-letter code: N-alpha-acetyltransferase 20 (178 aa).

Residues 2-157 enclose the N-acetyltransferase domain; it reads TTLRAFTCDD…DAYDMRKALS (156 aa).

It belongs to the acetyltransferase family. ARD1 subfamily. In terms of assembly, component of the N-terminal acetyltransferase B (NatB) complex which is composed of naa20 and naa25.

It localises to the cytoplasm. The protein localises to the nucleus. The catalysed reaction is N-terminal L-methionyl-L-asparaginyl-[protein] + acetyl-CoA = N-terminal N(alpha)-acetyl-L-methionyl-L-asparaginyl-[protein] + CoA + H(+). It carries out the reaction N-terminal L-methionyl-L-glutaminyl-[protein] + acetyl-CoA = N-terminal N(alpha)-acetyl-L-methionyl-L-glutaminyl-[protein] + CoA + H(+). It catalyses the reaction N-terminal L-methionyl-L-aspartyl-[protein] + acetyl-CoA = N-terminal N(alpha)-acetyl-L-methionyl-L-aspartyl-[protein] + CoA + H(+). The enzyme catalyses N-terminal L-methionyl-L-glutamyl-[protein] + acetyl-CoA = N-terminal N(alpha)-acetyl-L-methionyl-L-glutamyl-[protein] + CoA + H(+). In terms of biological role, catalytic subunit of the NatB complex which catalyzes acetylation of the N-terminal methionine residues of peptides beginning with Met-Asp, Met-Glu, Met-Asn and Met-Gln. Proteins with cell cycle functions are overrepresented in the pool of NatB substrates. Required for maintaining the structure and function of actomyosin fibers and for proper cellular migration. The protein is N-alpha-acetyltransferase 20 (naa20) of Danio rerio (Zebrafish).